The following is a 368-amino-acid chain: 3-dehydroquinate synthase (368 aa).

Residues 80–85, 114–118, 138–139, lysine 151, and lysine 160 contribute to the NAD(+) site; these read DAESAK, GAATD, and TT. 3 residues coordinate Zn(2+): glutamate 193, histidine 255, and histidine 271.

This sequence belongs to the sugar phosphate cyclases superfamily. Dehydroquinate synthase family. The cofactor is Co(2+). Zn(2+) serves as cofactor. NAD(+) is required as a cofactor.

It localises to the cytoplasm. It catalyses the reaction 7-phospho-2-dehydro-3-deoxy-D-arabino-heptonate = 3-dehydroquinate + phosphate. It participates in metabolic intermediate biosynthesis; chorismate biosynthesis; chorismate from D-erythrose 4-phosphate and phosphoenolpyruvate: step 2/7. Its function is as follows. Catalyzes the conversion of 3-deoxy-D-arabino-heptulosonate 7-phosphate (DAHP) to dehydroquinate (DHQ). In Corynebacterium jeikeium (strain K411), this protein is 3-dehydroquinate synthase.